A 483-amino-acid polypeptide reads, in one-letter code: Glucose-1-phosphate adenylyltransferase large subunit 3, chloroplastic/amyloplastic (483 aa).

The protein belongs to the bacterial/plant glucose-1-phosphate adenylyltransferase family. As to quaternary structure, heterotetramer. In terms of tissue distribution, tubers.

The protein localises to the plastid. The protein resides in the chloroplast. Its subcellular location is the amyloplast. It carries out the reaction alpha-D-glucose 1-phosphate + ATP + H(+) = ADP-alpha-D-glucose + diphosphate. The protein operates within glycan biosynthesis; starch biosynthesis. With respect to regulation, activated by 3'phosphoglycerate, inhibited by orthophosphate. Allosteric regulation. This protein plays a role in synthesis of starch. It catalyzes the synthesis of the activated glycosyl donor, ADP-glucose from Glc-1-P and ATP. This is Glucose-1-phosphate adenylyltransferase large subunit 3, chloroplastic/amyloplastic (AGPS3) from Solanum tuberosum (Potato).